We begin with the raw amino-acid sequence, 178 residues long: Large ribosomal subunit protein bL25 (178 aa).

The protein belongs to the bacterial ribosomal protein bL25 family. CTC subfamily. Part of the 50S ribosomal subunit; part of the 5S rRNA/L5/L18/L25 subcomplex. Contacts the 5S rRNA. Binds to the 5S rRNA independently of L5 and L18.

Functionally, this is one of the proteins that binds to the 5S RNA in the ribosome where it forms part of the central protuberance. This is Large ribosomal subunit protein bL25 from Sulfurimonas denitrificans (strain ATCC 33889 / DSM 1251) (Thiomicrospira denitrificans (strain ATCC 33889 / DSM 1251)).